We begin with the raw amino-acid sequence, 545 residues long: Chaperonin GroEL 5 (545 aa).

ATP-binding positions include 30-33 (TLGP), K51, 87-91 (DGTTT), G415, and D495.

It belongs to the chaperonin (HSP60) family. Forms a cylinder of 14 subunits composed of two heptameric rings stacked back-to-back. Interacts with the co-chaperonin GroES.

It localises to the cytoplasm. It carries out the reaction ATP + H2O + a folded polypeptide = ADP + phosphate + an unfolded polypeptide.. Its function is as follows. Together with its co-chaperonin GroES, plays an essential role in assisting protein folding. The GroEL-GroES system forms a nano-cage that allows encapsulation of the non-native substrate proteins and provides a physical environment optimized to promote and accelerate protein folding. This is Chaperonin GroEL 5 from Sinorhizobium medicae (strain WSM419) (Ensifer medicae).